A 695-amino-acid chain; its full sequence is Follicle-stimulating hormone receptor (695 aa).

An N-terminal signal peptide occupies residues 1–17 (MALLLVSLLAFLSLGSG). 2 cysteine pairs are disulfide-bonded: cysteine 18–cysteine 25 and cysteine 23–cysteine 32. The LRRNT domain maps to 18-46 (CHHRICHCSNRVFLCQESKVTEIPSDLPR). Over 18–366 (CHHRICHCSN…EDIMGYNILR (349 aa)) the chain is Extracellular. LRR repeat units follow at residues 49–72 (IELRFVLTKLRVIQKGAFSGFGDL), 73–97 (EKIEISQNDVLEVIEADVFSNLPKL), 98–118 (HEIRIEKANNLLYINPEAFQN), 119–143 (LPNLQYLLISNTGIKHLPDVHKIHS), 144–169 (LQKVLLDIQDNINIHTIERNSFVGLS), 170–192 (FESVILWLNKNGIQEIHNCAFNG), 193–216 (TQLDELNLSDNNNLEELPNDVFHG), 217–240 (ASGPVILDISRTRIHSLPSYGLEN), and 241–259 (LKKLRARSTYNLKKLPTLE). 2 N-linked (GlcNAc...) asparagine glycosylation sites follow: asparagine 191 and asparagine 199. Disulfide bonds link cysteine 275-cysteine 346, cysteine 276-cysteine 292, cysteine 276-cysteine 356, and cysteine 292-cysteine 338. Asparagine 293 and asparagine 318 each carry an N-linked (GlcNAc...) asparagine glycan. Tyrosine 335 bears the Sulfotyrosine mark. The chain crosses the membrane as a helical span at residues 367-387 (VLIWFISILAITGNIIVLVIL). Residues 388–398 (TTSQYKLTVPR) lie on the Cytoplasmic side of the membrane. The helical transmembrane segment at 399 to 421 (FLMCNLAFADLCIGIYLLLIASV) threads the bilayer. At 422–443 (DIHTKSQYHNYAIDWQTGAGCD) the chain is on the extracellular side. Residues cysteine 442 and cysteine 517 are joined by a disulfide bond. A helical membrane pass occupies residues 444–465 (AAGFFTVFASELSVYTLTAITL). At 466-485 (ERWHTITHAMQLDCKVQLRH) the chain is on the cytoplasmic side. A helical transmembrane segment spans residues 486-508 (AASVMVMGWIFAFAAALFPIFGI). The Extracellular portion of the chain corresponds to 509-528 (SSYMKVSICLPMDIDSPLSQ). The chain crosses the membrane as a helical span at residues 529 to 550 (LYVMSLLVLNVLAFVVICGCYI). Topologically, residues 551–573 (HIYLTVRNPNIVSSSSDTRIAKR) are cytoplasmic. Residues 574–597 (MAMLIFTDFLCMAPISFFAISASL) form a helical membrane-spanning segment. Over 598–608 (KVPLITVSKAK) the chain is Extracellular. The helical transmembrane segment at 609 to 630 (ILLVLFHPINSCANPFLYAIFT) threads the bilayer. Topologically, residues 631-695 (KNFRRDFFIL…LVPLSHLAQN (65 aa)) are cytoplasmic.

The protein belongs to the G-protein coupled receptor 1 family. FSH/LSH/TSH subfamily. In terms of assembly, homotrimer. Functions as a homotrimer binding the FSH hormone heterodimer composed of CGA and FSHB. Interacts with ARRB2. Interacts with APPL2; interaction is independent of follicle stimulating hormone stimulation. Post-translationally, sulfated. In terms of processing, N-glycosylated; indirectly required for FSH-binding, possibly via a conformational change that allows high affinity binding of hormone. Sertoli cells and ovarian granulosa cells.

It localises to the cell membrane. G protein-coupled receptor for follitropin, the follicle-stimulating hormone. Through cAMP production activates the downstream PI3K-AKT and ERK1/ERK2 signaling pathways. The protein is Follicle-stimulating hormone receptor (FSHR) of Homo sapiens (Human).